The primary structure comprises 509 residues: MEAIISFAGIGINYKKLQSKLQHDFGRLLKALTVTARALPGQPKHIAIRQETAFTLQGEYIYFPILLRKQFEMFNMVYTTRPVSLRALPCVETEFPLFNYQQEMVDKIHKKLLSPYGRFYLHLNTGLGKTRIAISIIQKLLYPTLVIVPTKAIQIQWIDELTLLLPHLRVAAYNNAACKKKDMTSKEYDVIVGIINTLRKKPEQFFEPFGLVVLDEAHELHSPENYKIFWKIQLSRILGLSATPLDRPDGMDKIIIHHLGQPQRTVSPTTTFSGYVREIEYQGHPDFVSPVCINEKVSAIATIDKLLQDPSRIQLVVNEAKRLYSLHTAEPHKWGTDEPYGIIIFVEFRKLLEIFYQALSKEFKDVQIVVPEVALLCGGVSNTALSQAHSASIILLTYGYGRRGISFKHMTSIIMATPRRNNMEQILGRITRQGSDEKKVRIVVDIKDTLSPLSSQVYDRHRIYKKKGYPIFKCSASYQQPYSSNEVLIWDPYNESCLACTTTPPSPSK.

Positions 110-262 (KKLLSPYGRF…KIIIHHLGQP (153 aa)) constitute a Helicase ATP-binding domain. 123 to 130 (LNTGLGKT) lines the ATP pocket. A DEAH box motif is present at residues 215–218 (DEAH).

Belongs to the DEAD box helicase family. DEAH subfamily.

It carries out the reaction ATP + H2O = ADP + phosphate + H(+). The chain is Putative ATP-dependent RNA helicase QP509L from African swine fever virus (strain Badajoz 1971 Vero-adapted) (Ba71V).